The following is a 146-amino-acid chain: uncharacterized protein (146 aa).

This is an uncharacterized protein from Bacillus subtilis (strain 168).